The following is a 451-amino-acid chain: Tubulin alpha-1A chain (451 aa).

Positions 10, 11, 12, and 15 each coordinate GTP. Lys40 is subject to N6-acetyllysine. Positions 71, 99, 140, 143, 144, 145, 146, 179, 183, 206, 224, 228, and 252 each coordinate GTP. Glu71 contributes to the Mg(2+) binding site. The active site involves Glu254. Position 282 is a 3'-nitrotyrosine (Tyr282). Ser439 is modified (phosphoserine). 5-glutamyl polyglutamate occurs at positions 443 and 445. The residue at position 451 (Tyr451) is a 3'-nitrotyrosine.

Belongs to the tubulin family. In terms of assembly, heterodimer of alpha- and beta-tubulin. A typical microtubule is a hollow water-filled tube with an outer diameter of 25 nm and an inner diameter of 15 nM. Alpha-beta heterodimers associate head-to-tail to form protofilaments running lengthwise along the microtubule wall with the beta-tubulin subunit facing the microtubule plus end conferring a structural polarity. Microtubules usually have 13 protofilaments but different protofilament numbers can be found in some organisms and specialized cells. Interacts with gamma-tubulin; the interaction allows microtubules to nucleate from the gamma-tubulin ring complex (gTuRC). Nascent microtubule interacts (via alpha-tubulin MREC motif) with TTC5/STRAP; this interaction may result in tubulin mRNA-targeted degradation. Component of sperm flagellar doublet microtubules. Requires Mg(2+) as cofactor. Some glutamate residues at the C-terminus are polyglycylated, resulting in polyglycine chains on the gamma-carboxyl group. Glycylation is mainly limited to tubulin incorporated into axonemes (cilia and flagella) whereas glutamylation is prevalent in neuronal cells, centrioles, axonemes, and the mitotic spindle. Both modifications can coexist on the same protein on adjacent residues, and lowering polyglycylation levels increases polyglutamylation, and reciprocally. Cilia and flagella glycylation is required for their stability and maintenance. Flagella glycylation controls sperm motility. Post-translationally, some glutamate residues at the C-terminus are polyglutamylated, resulting in polyglutamate chains on the gamma-carboxyl group. Polyglutamylation plays a key role in microtubule severing by spastin (SPAST). SPAST preferentially recognizes and acts on microtubules decorated with short polyglutamate tails: severing activity by SPAST increases as the number of glutamates per tubulin rises from one to eight, but decreases beyond this glutamylation threshold. Glutamylation is also involved in cilia motility. In terms of processing, acetylation of alpha chains at Lys-40 is located inside the microtubule lumen. This modification has been correlated with increased microtubule stability, intracellular transport and ciliary assembly. Methylation of alpha chains at Lys-40 is found in mitotic microtubules and is required for normal mitosis and cytokinesis contributing to genomic stability. Post-translationally, nitration of Tyr-451 is irreversible and interferes with normal dynein intracellular distribution. In terms of processing, undergoes a tyrosination/detyrosination cycle, the cyclic removal and re-addition of a C-terminal tyrosine residue by the enzymes tubulin tyrosine carboxypeptidase (MATCAP1, VASH1 or VASH2) and tubulin tyrosine ligase (TTL), respectively. Tyrosination promotes microtubule interaction with CAP-Gly domain-containing proteins such as CLIP1, CLIP2 and DCTN1. Tyrosination regulates the initiation of dynein-dynactin motility via interaction with DCTN1, which brings the dynein-dynactin complex into contact with microtubules. In neurons, tyrosinated tubulins mediate the initiation of retrograde vesicle transport. Post-translationally, detyrosination is involved in metaphase plate congression by guiding chromosomes during mitosis: detyrosination promotes interaction with CENPE, promoting pole-proximal transport of chromosomes toward the equator. Detyrosination increases microtubules-dependent mechanotransduction in dystrophic cardiac and skeletal muscle. In cardiomyocytes, detyrosinated microtubules are required to resist to contractile compression during contraction: detyrosination promotes association with desmin (DES) at force-generating sarcomeres, leading to buckled microtubules and mechanical resistance to contraction.

The protein localises to the cytoplasm. It localises to the cytoskeleton. The protein resides in the flagellum axoneme. The enzyme catalyses GTP + H2O = GDP + phosphate + H(+). Tubulin is the major constituent of microtubules, protein filaments consisting of alpha- and beta-tubulin heterodimers. Microtubules grow by the addition of GTP-tubulin dimers to the microtubule end, where a stabilizing cap forms. Below the cap, tubulin dimers are in GDP-bound state, owing to GTPase activity of alpha-tubulin. The protein is Tubulin alpha-1A chain (TUBA1A) of Sus scrofa (Pig).